The chain runs to 198 residues: FMN-dependent NADH:quinone oxidoreductase (198 aa).

Residues Ser10, Ser16–Ser18, Met94–Phe97, and Thr138–Gly141 each bind FMN.

This sequence belongs to the azoreductase type 1 family. In terms of assembly, homodimer. FMN is required as a cofactor.

The catalysed reaction is 2 a quinone + NADH + H(+) = 2 a 1,4-benzosemiquinone + NAD(+). It carries out the reaction N,N-dimethyl-1,4-phenylenediamine + anthranilate + 2 NAD(+) = 2-(4-dimethylaminophenyl)diazenylbenzoate + 2 NADH + 2 H(+). Its function is as follows. Quinone reductase that provides resistance to thiol-specific stress caused by electrophilic quinones. In terms of biological role, also exhibits azoreductase activity. Catalyzes the reductive cleavage of the azo bond in aromatic azo compounds to the corresponding amines. The chain is FMN-dependent NADH:quinone oxidoreductase from Shewanella putrefaciens (strain CN-32 / ATCC BAA-453).